A 141-amino-acid chain; its full sequence is Auxin-responsive protein SAUR63 (141 aa).

Belongs to the ARG7 family. In terms of tissue distribution, expressed in hypocotyls, cotyledons, petioles, young rosette leaves, apical portion of inflorescence stems, stamen filaments and petals.

It is found in the cell membrane. May promote auxin-stimulated organ elongation, such as hypocotyls, stamen filaments and petals. The polypeptide is Auxin-responsive protein SAUR63 (Arabidopsis thaliana (Mouse-ear cress)).